The following is an 86-amino-acid chain: Exodeoxyribonuclease 7 small subunit (86 aa).

Positions 64–86 are disordered; it reads SNPETVQDKTDTDEPDSNEFSLT.

The protein belongs to the XseB family. In terms of assembly, heterooligomer composed of large and small subunits.

It is found in the cytoplasm. It catalyses the reaction Exonucleolytic cleavage in either 5'- to 3'- or 3'- to 5'-direction to yield nucleoside 5'-phosphates.. In terms of biological role, bidirectionally degrades single-stranded DNA into large acid-insoluble oligonucleotides, which are then degraded further into small acid-soluble oligonucleotides. The chain is Exodeoxyribonuclease 7 small subunit from Akkermansia muciniphila (strain ATCC BAA-835 / DSM 22959 / JCM 33894 / BCRC 81048 / CCUG 64013 / CIP 107961 / Muc).